The sequence spans 232 residues: Large ribosomal subunit protein uL1 (232 aa).

This sequence belongs to the universal ribosomal protein uL1 family. As to quaternary structure, part of the 50S ribosomal subunit.

Functionally, binds directly to 23S rRNA. The L1 stalk is quite mobile in the ribosome, and is involved in E site tRNA release. Protein L1 is also a translational repressor protein, it controls the translation of the L11 operon by binding to its mRNA. This is Large ribosomal subunit protein uL1 from Phocaeicola vulgatus (strain ATCC 8482 / DSM 1447 / JCM 5826 / CCUG 4940 / NBRC 14291 / NCTC 11154) (Bacteroides vulgatus).